The sequence spans 420 residues: Glucose-1-phosphate adenylyltransferase (420 aa).

Alpha-D-glucose 1-phosphate contacts are provided by residues Y107, G172, 187–188, and S205; that span reads EK.

It belongs to the bacterial/plant glucose-1-phosphate adenylyltransferase family. Homotetramer.

The catalysed reaction is alpha-D-glucose 1-phosphate + ATP + H(+) = ADP-alpha-D-glucose + diphosphate. It participates in glycan biosynthesis; glycogen biosynthesis. Its function is as follows. Involved in the biosynthesis of ADP-glucose, a building block required for the elongation reactions to produce glycogen. Catalyzes the reaction between ATP and alpha-D-glucose 1-phosphate (G1P) to produce pyrophosphate and ADP-Glc. The chain is Glucose-1-phosphate adenylyltransferase from Rhizobium johnstonii (strain DSM 114642 / LMG 32736 / 3841) (Rhizobium leguminosarum bv. viciae).